The chain runs to 76 residues: Large ribosomal subunit protein uL24 (76 aa).

Belongs to the universal ribosomal protein uL24 family. Part of the 50S ribosomal subunit.

One of two assembly initiator proteins, it binds directly to the 5'-end of the 23S rRNA, where it nucleates assembly of the 50S subunit. Functionally, one of the proteins that surrounds the polypeptide exit tunnel on the outside of the subunit. This chain is Large ribosomal subunit protein uL24, found in Wolinella succinogenes (strain ATCC 29543 / DSM 1740 / CCUG 13145 / JCM 31913 / LMG 7466 / NCTC 11488 / FDC 602W) (Vibrio succinogenes).